The primary structure comprises 670 residues: Penicillin-binding protein activator LpoA (670 aa).

The first 26 residues, Met-1 to Gly-26, serve as a signal peptide directing secretion. Cys-27 carries N-palmitoyl cysteine lipidation. The S-diacylglycerol cysteine moiety is linked to residue Cys-27.

Belongs to the LpoA family. In terms of assembly, interacts with PBP1a.

It is found in the cell outer membrane. In terms of biological role, regulator of peptidoglycan synthesis that is essential for the function of penicillin-binding protein 1A (PBP1a). The protein is Penicillin-binding protein activator LpoA of Erwinia tasmaniensis (strain DSM 17950 / CFBP 7177 / CIP 109463 / NCPPB 4357 / Et1/99).